We begin with the raw amino-acid sequence, 284 residues long: Proteasome subunit pbs-5 (284 aa).

Positions 1 to 64 (MWGETFDDFE…AGKSMQFRKG (64 aa)) are cleaved as a propeptide — removed in mature form. Threonine 65 (nucleophile) is an active-site residue.

The protein belongs to the peptidase T1B family. As to quaternary structure, the 26S proteasome consists of a 20S proteasome core and two 19S regulatory subunits. The 20S proteasome core is composed of 28 subunits that are arranged in four stacked rings, resulting in a barrel-shaped structure. The two end rings are each formed by seven alpha subunits, and the two central rings are each formed by seven beta subunits. The catalytic chamber with the active sites is on the inside of the barrel.

Its subcellular location is the cytoplasm. The protein resides in the nucleus. The catalysed reaction is Cleavage of peptide bonds with very broad specificity.. Component of the 20S core proteasome complex involved in the proteolytic degradation of most intracellular proteins. This complex plays numerous essential roles within the cell by associating with different regulatory particles. Associated with two 19S regulatory particles, forms the 26S proteasome and thus participates in the ATP-dependent degradation of ubiquitinated proteins. The 26S proteasome plays a key role in the maintenance of protein homeostasis by removing misfolded or damaged proteins that could impair cellular functions, and by removing proteins whose functions are no longer required. This Caenorhabditis elegans protein is Proteasome subunit pbs-5.